A 2203-amino-acid polypeptide reads, in one-letter code: Voltage-dependent L-type calcium channel subunit alpha-1D (2203 aa).

2 disordered regions span residues 1 to 51 and 64 to 100; these read MMMM…QTVL and KAAQ…SSNS. At 1–126 the chain is on the cytoplasmic side; the sequence is MMMMMMMKKM…RACISIVDWK (126 aa). Residues 38–51 are compositionally biased toward polar residues; sequence GPTSQPNSSKQTVL. Basic residues predominate over residues 82-93; sequence QRKRQQYAKSKK. One copy of the I repeat lies at 112–408; it reads NNPIRRACIS…NLVLGVLSGE (297 aa). The chain crosses the membrane as a helical span at residues 127-145; the sequence is PFDIFILLAIFANCVALAI. The Extracellular segment spans residues 146–163; that stretch reads YIPFPEDDSNSTNHNLEK. The N-linked (GlcNAc...) asparagine glycan is linked to Asn155. A helical membrane pass occupies residues 164–183; sequence VEYAFLIIFTVETFLKIIAS. The Cytoplasmic segment spans residues 184 to 195; the sequence is GLLLHPNASVRN. Residues 196 to 214 form a helical membrane-spanning segment; the sequence is GWNLLDFVIVIVGLFSVIL. At 215-235 the chain is on the extracellular side; it reads EQLTKETEGGNHSSGKSGGFD. Asn225 carries N-linked (GlcNAc...) asparagine glycosylation. The chain crosses the membrane as a helical span at residues 236–254; it reads VKALRAFRVLRPLRLVSGV. The Cytoplasmic portion of the chain corresponds to 255 to 273; sequence PSLQVVLNSIIKAMVPLLH. The helical transmembrane segment at 274–293 threads the bilayer; the sequence is IALLVLFVIIIYAIIGLELF. At 294 to 381 the chain is on the extracellular side; sequence IGKMHKTCFF…WVNDAIGWEW (88 aa). N-linked (GlcNAc...) asparagine glycosylation occurs at Asn329. A Ca(2+)-binding site is contributed by Glu364. Residues 382–406 form a helical membrane-spanning segment; it reads PWVYFVSLIILGSFFVLNLVLGVLS. Residues 407 to 582 are Cytoplasmic-facing; sequence GEFSKEREKA…RRCRAAVKSV (176 aa). Positions 429–446 are binding to the beta subunit; the sequence is QQLEEDLKGYLDWITQAE. A disordered region spans residues 449–480; it reads DPENEEEGGEEGKRNTSMPTSETESVNTENVS. Positions 463 to 479 are enriched in polar residues; the sequence is NTSMPTSETESVNTENV. The stretch at 528 to 774 is one II repeat; it reads EALCVCRCSL…DWNAVMYDGI (247 aa). The helical transmembrane segment at 583 to 602 threads the bilayer; that stretch reads TFYWLVIVLVFLNTLTISSE. The Extracellular segment spans residues 603–617; sequence HYNQPDWLTQIQDIA. The chain crosses the membrane as a helical span at residues 618–636; the sequence is NKVLLALFTCEMLVKMYSL. At 637–644 the chain is on the cytoplasmic side; that stretch reads GLQAYFVS. The chain crosses the membrane as a helical span at residues 645–663; sequence LFNRFDCFVVCGGITETIL. Topologically, residues 664–673 are extracellular; it reads VELELMSPLG. A helical transmembrane segment spans residues 674 to 692; sequence VSVFRCVRLLRIFKVTRHW. Over 693–711 the chain is Cytoplasmic; sequence TSLSNLVASLLNSMKSIAS. The chain crosses the membrane as a helical span at residues 712-732; it reads LLLLLFLFIIIFSLLGMQLFG. At 733–786 the chain is on the extracellular side; the sequence is GKFNFDETQTKRSTFDNFPQALLTVFQILTGEDWNAVMYDGIMAYGGPSSSGMI. Position 764 (Glu764) interacts with Ca(2+). The chain crosses the membrane as a helical span at residues 787 to 811; that stretch reads VCIYFIILFICGNYILLKLFLAIAV. Residues 812–945 lie on the Cytoplasmic side of the membrane; it reads DNLADAESLN…VGCHKLINHH (134 aa). The disordered stretch occupies residues 822–909; the sequence is TAQKEEAEEK…AGPRPRRISE (88 aa). The segment covering 824–849 has biased composition (basic and acidic residues); that stretch reads QKEEAEEKERKKIARKESLENKKNNK. Positions 850–861 are enriched in polar residues; sequence PEVNQIANSDNK. Residues 884-897 are compositionally biased toward acidic residues; that stretch reads VGEEEEEEEEDEPE. Residues 892–1174 form an III repeat; it reads EEDEPEVPAG…LLYKAIDSNG (283 aa). A helical transmembrane segment spans residues 946-964; sequence IFTNLILVFIMLSSAALAA. Residues 965–980 are Extracellular-facing; that stretch reads EDPIRSHSFRNTILGY. Residues 981-1000 traverse the membrane as a helical segment; the sequence is FDYAFTAIFTVEILLKMTTF. The Cytoplasmic segment spans residues 1001–1012; it reads GAFLHKGAFCRN. A helical membrane pass occupies residues 1013–1031; sequence YFNLLDMLVVGVSLVSFGI. Residues 1032–1037 are Extracellular-facing; it reads QSSAIS. The chain crosses the membrane as a helical span at residues 1038 to 1057; it reads VVKILRVLRVLRPLRAINRA. The Cytoplasmic segment spans residues 1058–1076; that stretch reads KGLKHVVQCVFVAIRTIGN. The chain crosses the membrane as a helical span at residues 1077–1096; it reads IMIVTTLLQFMFACIGVQLF. Topologically, residues 1097-1186 are extracellular; that stretch reads KGKFYRCTDE…VGPVYNYRVE (90 aa). The interval 1134 to 1224 is dihydropyridine binding; sequence RIWQNSDFNF…QEQGEKEYKN (91 aa). Glu1160 lines the Ca(2+) pocket. The chain crosses the membrane as a helical span at residues 1187 to 1207; it reads ISIFFIIYIIIVAFFMMNIFV. Residues 1208 to 1264 are Cytoplasmic-facing; it reads GFVIVTFQEQGEKEYKNCELDKNQRQCVEYALKARPLRRYIPKNPYQYKFWYVVNSS. Residues 1211–1486 form an IV repeat; it reads IVTFQEQGEK…YTCGSNFAIV (276 aa). A helical transmembrane segment spans residues 1265 to 1283; the sequence is PFEYMMFVLIMLNTLCLAM. The Extracellular portion of the chain corresponds to 1284-1298; that stretch reads QHYEQSKMFNDAMDI. The helical transmembrane segment at 1299 to 1318 threads the bilayer; it reads LNMVFTGVFTVEMVLKVIAF. The Cytoplasmic portion of the chain corresponds to 1319 to 1325; sequence KPKGYFS. Residues 1326–1347 traverse the membrane as a helical segment; the sequence is DAWNTFDSLIVIGSIIDVALSE. Residues 1348-1357 are Extracellular-facing; the sequence is ADNSEESNRI. The chain crosses the membrane as a helical span at residues 1358 to 1377; the sequence is SITFFRLFRVMRLVKLLSRG. The Cytoplasmic portion of the chain corresponds to 1378 to 1396; it reads EGIRTLLWTFIKSFQALPY. The chain crosses the membrane as a helical span at residues 1397–1416; the sequence is VALLIAMLFFIYAVIGMQMF. Residues 1417 to 1483 lie on the Extracellular side of the membrane; sequence GKVAMRDNNQ…GEEYTCGSNF (67 aa). A dihydropyridine binding region spans residues 1464–1530; sequence LCDPDSDYNP…LGPHHLDEFK (67 aa). The tract at residues 1476–1519 is phenylalkylamine binding; that stretch reads EYTCGSNFAIVYFISFYMLCAFLIINLFVAVIMDNFDYLTRDWS. The chain crosses the membrane as a helical span at residues 1484–1508; the sequence is AIVYFISFYMLCAFLIINLFVAVIM. Topologically, residues 1509–2203 are cytoplasmic; that stretch reads DNFDYLTRDW…ADEMICITTL (695 aa). 4 disordered regions span residues 1734–1766, 1795–1816, 1920–1963, and 2176–2195; these read NHVN…PASD, TSTN…KRPS, FERP…HRRS, and GPGY…DLAD. A compositionally biased stretch (polar residues) spans 1795–1806; that stretch reads TSTNANLNNANM. Residues 2180–2195 show a composition bias toward acidic residues; that stretch reads SDEEPDPGREEEDLAD.

It belongs to the calcium channel alpha-1 subunit (TC 1.A.1.11) family. CACNA1D subfamily. As to quaternary structure, voltage-dependent calcium channels are multisubunit complexes, consisting of alpha-1, alpha-2, beta and delta subunits in a 1:1:1:1 ratio. The channel activity is directed by the pore-forming and voltage-sensitive alpha-1 subunit. In many cases, this subunit is sufficient to generate voltage-sensitive calcium channel activity. The auxiliary subunits beta and alpha-2/delta linked by a disulfide bridge regulate the channel activity. Interacts with CABP1 and CABP4, resulting in a near elimination of calcium-dependent inactivation of the channel. Interacts with RIMBP2. In terms of tissue distribution, expressed in brain, pancreatic islets and B-lymphocytes.

Its subcellular location is the membrane. The enzyme catalyses Ca(2+)(in) = Ca(2+)(out). Its function is as follows. Voltage-sensitive calcium channels (VSCC) mediate the entry of calcium ions into excitable cells and are also involved in a variety of calcium-dependent processes, including muscle contraction, hormone or neurotransmitter release, gene expression, cell motility, cell division and cell death. The isoform alpha-1D gives rise to L-type calcium currents. Long-lasting (L-type) calcium channels belong to the 'high-voltage activated' (HVA) group. They are blocked by dihydropyridines (DHP), phenylalkylamines, and by benzothiazepines. Functionally, voltage-sensitive calcium channels (VSCC) mediate the entry of calcium ions into excitable cells and are also involved in a variety of calcium-dependent processes, including muscle contraction, hormone or neurotransmitter release, gene expression, cell motility, cell division and cell death. The isoform alpha-1D gives rise to L-type calcium currents. The polypeptide is Voltage-dependent L-type calcium channel subunit alpha-1D (Cacna1d) (Rattus norvegicus (Rat)).